The chain runs to 900 residues: Alanine--tRNA ligase (900 aa).

Zn(2+) contacts are provided by His604, His608, Cys708, and His712.

The protein belongs to the class-II aminoacyl-tRNA synthetase family. It depends on Zn(2+) as a cofactor.

It is found in the cytoplasm. The catalysed reaction is tRNA(Ala) + L-alanine + ATP = L-alanyl-tRNA(Ala) + AMP + diphosphate. In terms of biological role, catalyzes the attachment of alanine to tRNA(Ala) in a two-step reaction: alanine is first activated by ATP to form Ala-AMP and then transferred to the acceptor end of tRNA(Ala). Also edits incorrectly charged Ser-tRNA(Ala) and Gly-tRNA(Ala) via its editing domain. This is Alanine--tRNA ligase from Saccharolobus islandicus (strain M.16.27) (Sulfolobus islandicus).